A 92-amino-acid chain; its full sequence is Bombyxin A-9 (92 aa).

Residues 1-19 form the signal peptide; sequence MKLLLAIALMLTTVMWAST. A Pyrrolidone carboxylic acid modification is found at Gln-20. 3 disulfide bridges follow: Cys-29/Cys-79, Cys-41/Cys-92, and Cys-78/Cys-83. The propeptide at 50–71 is c peptide like; the sequence is SDAQFASYGSAWLMPYSEGRDQ.

Belongs to the insulin family. In terms of assembly, heterodimer of a B chain and an A chain linked by two disulfide bonds.

The protein localises to the secreted. Brain peptide responsible for activation of prothoracic glands to produce ecdysone in insects. The polypeptide is Bombyxin A-9 (BBXA9) (Bombyx mori (Silk moth)).